The chain runs to 59 residues: Putative antitoxin AF_1090 (59 aa).

This sequence belongs to the UPF0165 family.

Possibly the antitoxin component of a type II toxin-antitoxin (TA) system. This Archaeoglobus fulgidus (strain ATCC 49558 / DSM 4304 / JCM 9628 / NBRC 100126 / VC-16) protein is Putative antitoxin AF_1090.